Consider the following 79-residue polypeptide: Acyl carrier protein (79 aa).

The region spanning 4–79 (AEIKDKVYDI…QAIDYIVNKK (76 aa)) is the Carrier domain. Serine 39 carries the post-translational modification O-(pantetheine 4'-phosphoryl)serine.

The protein belongs to the acyl carrier protein (ACP) family. In terms of processing, 4'-phosphopantetheine is transferred from CoA to a specific serine of apo-ACP by AcpS. This modification is essential for activity because fatty acids are bound in thioester linkage to the sulfhydryl of the prosthetic group.

It localises to the cytoplasm. The protein operates within lipid metabolism; fatty acid biosynthesis. In terms of biological role, carrier of the growing fatty acid chain in fatty acid biosynthesis. This is Acyl carrier protein from Pelodictyon phaeoclathratiforme (strain DSM 5477 / BU-1).